A 199-amino-acid polypeptide reads, in one-letter code: UPF0329 protein ECU01_0120/ECU01_1490/ECU08_0050 (199 aa).

The protein belongs to the UPF0329 family.

The protein is UPF0329 protein ECU01_0120/ECU01_1490/ECU08_0050 of Encephalitozoon cuniculi (strain GB-M1) (Microsporidian parasite).